A 957-amino-acid polypeptide reads, in one-letter code: ERC protein 2 (957 aa).

A compositionally biased stretch (polar residues) spans 1–13; sequence MYGSARTISNLEG. Positions 1-44 are disordered; sequence MYGSARTISNLEGSPSRSPRLPRSPRLGHRRTSSGGGGGTGKTL. A compositionally biased stretch (low complexity) spans 14–25; sequence SPSRSPRLPRSP. 2 positions are modified to phosphoserine: serine 65 and serine 666. The stretch at 140 to 917 forms a coiled coil; sequence RQVRDSTMLD…RMKLMADNYD (778 aa). Basic residues predominate over residues 922-943; the sequence is HYHHHHHHHHHRSPGRSQHSNH. Residues 922–957 are disordered; it reads HYHHHHHHHHHRSPGRSQHSNHRPSPDQDDEEGIWA. The span at 948–957 shows a compositional bias: acidic residues; that stretch reads DQDDEEGIWA.

In terms of assembly, interacts with BSN, ERC1, PPFIA1, PPFIA2, PPFIA3 and PPFIA4. Interacts through its C-terminus with the PDZ domain of RIMS1. Part of a complex consisting of ERC2, RIMS1 and UNC13A. As to expression, expressed throughout the central nervous system, including hippocampus, cortex, cerebellum and olfactory bulb.

The protein resides in the cytoplasm. The protein localises to the synapse. Its subcellular location is the presynaptic active zone. It is found in the cytoskeleton. Its function is as follows. Thought to be involved in the organization of the cytomatrix at the nerve terminals active zone (CAZ) which regulates neurotransmitter release. Seems to act together with BSN. May recruit liprin-alpha proteins to the CAZ. In Mus musculus (Mouse), this protein is ERC protein 2 (Erc2).